A 630-amino-acid polypeptide reads, in one-letter code: Biosynthetic arginine decarboxylase (630 aa).

The residue at position 99 (Lys99) is an N6-(pyridoxal phosphate)lysine. 279–289 lines the substrate pocket; sequence FDVGGGLGVDY.

The protein belongs to the Orn/Lys/Arg decarboxylase class-II family. SpeA subfamily. Mg(2+) is required as a cofactor. It depends on pyridoxal 5'-phosphate as a cofactor.

The catalysed reaction is L-arginine + H(+) = agmatine + CO2. It functions in the pathway amine and polyamine biosynthesis; agmatine biosynthesis; agmatine from L-arginine: step 1/1. Its function is as follows. Catalyzes the biosynthesis of agmatine from arginine. The protein is Biosynthetic arginine decarboxylase of Neisseria meningitidis serogroup B (strain ATCC BAA-335 / MC58).